A 126-amino-acid chain; its full sequence is Small ribosomal subunit protein uS13c (126 aa).

The interval 95-126 (GLPLRGQNTRTNARTKRGIKKTMAGKKKAPRK) is disordered. Residues 107–126 (ARTKRGIKKTMAGKKKAPRK) are compositionally biased toward basic residues.

It belongs to the universal ribosomal protein uS13 family. In terms of assembly, part of the 30S ribosomal subunit.

It localises to the plastid. It is found in the chloroplast. Functionally, located at the top of the head of the 30S subunit, it contacts several helices of the 16S rRNA. This chain is Small ribosomal subunit protein uS13c, found in Gracilaria tenuistipitata var. liui (Red alga).